We begin with the raw amino-acid sequence, 541 residues long: uncharacterized protein (541 aa).

It localises to the virion. This is an uncharacterized protein from Acanthamoeba polyphaga mimivirus (APMV).